Here is a 259-residue protein sequence, read N- to C-terminus: Pimeloyl-[acyl-carrier protein] methyl ester esterase (259 aa).

Residues tryptophan 18, 78–79, and 139–143 each bind substrate; these read SL and FLALD. Serine 78 (nucleophile) is an active-site residue. Active-site residues include aspartate 203 and histidine 231. Histidine 231 contacts substrate.

The protein belongs to the AB hydrolase superfamily. Carboxylesterase BioH family. As to quaternary structure, monomer.

The protein resides in the cytoplasm. The catalysed reaction is 6-carboxyhexanoyl-[ACP] methyl ester + H2O = 6-carboxyhexanoyl-[ACP] + methanol + H(+). It functions in the pathway cofactor biosynthesis; biotin biosynthesis. Functionally, the physiological role of BioH is to remove the methyl group introduced by BioC when the pimeloyl moiety is complete. It allows to synthesize pimeloyl-ACP via the fatty acid synthetic pathway through the hydrolysis of the ester bonds of pimeloyl-ACP esters. The protein is Pimeloyl-[acyl-carrier protein] methyl ester esterase of Stenotrophomonas maltophilia (strain R551-3).